The following is a 376-amino-acid chain: Chorismate synthase (376 aa).

NADP(+) contacts are provided by Arg39 and Arg45. FMN-binding positions include 115 to 117, Gly276, 291 to 295, and Arg317; these read RSS and KPIPT.

This sequence belongs to the chorismate synthase family. In terms of assembly, homotetramer. Requires FMNH2 as cofactor.

The catalysed reaction is 5-O-(1-carboxyvinyl)-3-phosphoshikimate = chorismate + phosphate. It participates in metabolic intermediate biosynthesis; chorismate biosynthesis; chorismate from D-erythrose 4-phosphate and phosphoenolpyruvate: step 7/7. In terms of biological role, catalyzes the anti-1,4-elimination of the C-3 phosphate and the C-6 proR hydrogen from 5-enolpyruvylshikimate-3-phosphate (EPSP) to yield chorismate, which is the branch point compound that serves as the starting substrate for the three terminal pathways of aromatic amino acid biosynthesis. This reaction introduces a second double bond into the aromatic ring system. The protein is Chorismate synthase of Thermotoga maritima (strain ATCC 43589 / DSM 3109 / JCM 10099 / NBRC 100826 / MSB8).